The sequence spans 348 residues: Protein-glutamate methylesterase/protein-glutamine glutaminase 2 (348 aa).

In terms of domain architecture, Response regulatory spans 5-122 (KVLIIDDSAL…DLGLSQYRDE (118 aa)). At Asp-56 the chain carries 4-aspartylphosphate. The 192-residue stretch at 157–348 (SLKTGFLCAI…AANIIKHALK (192 aa)) folds into the CheB-type methylesterase domain. Residues Ser-169, His-195, and Asp-291 contribute to the active site.

It belongs to the CheB family. In terms of processing, phosphorylated by CheA. Phosphorylation of the N-terminal regulatory domain activates the methylesterase activity.

Its subcellular location is the cytoplasm. The catalysed reaction is [protein]-L-glutamate 5-O-methyl ester + H2O = L-glutamyl-[protein] + methanol + H(+). The enzyme catalyses L-glutaminyl-[protein] + H2O = L-glutamyl-[protein] + NH4(+). Involved in chemotaxis. Part of a chemotaxis signal transduction system that modulates chemotaxis in response to various stimuli. Catalyzes the demethylation of specific methylglutamate residues introduced into the chemoreceptors (methyl-accepting chemotaxis proteins or MCP) by CheR. Also mediates the irreversible deamidation of specific glutamine residues to glutamic acid. This is Protein-glutamate methylesterase/protein-glutamine glutaminase 2 from Saccharophagus degradans (strain 2-40 / ATCC 43961 / DSM 17024).